The sequence spans 90 residues: UPF0223 protein LMHCC_1569 (90 aa).

Belongs to the UPF0223 family.

In Listeria monocytogenes serotype 4a (strain HCC23), this protein is UPF0223 protein LMHCC_1569.